Here is a 217-residue protein sequence, read N- to C-terminus: Ribonuclease HII (217 aa).

The 202-residue stretch at 16–217 (YCIAGVDEVG…VARVLGTYHD (202 aa)) folds into the RNase H type-2 domain. Residues Asp22, Glu23, and Asp114 each coordinate a divalent metal cation.

It belongs to the RNase HII family. It depends on Mn(2+) as a cofactor. Requires Mg(2+) as cofactor.

The protein resides in the cytoplasm. It carries out the reaction Endonucleolytic cleavage to 5'-phosphomonoester.. Its function is as follows. Endonuclease that specifically degrades the RNA of RNA-DNA hybrids. The sequence is that of Ribonuclease HII from Colwellia psychrerythraea (strain 34H / ATCC BAA-681) (Vibrio psychroerythus).